Reading from the N-terminus, the 127-residue chain is Lysozyme C (127 aa).

The 127-residue stretch at 1–127 (KDIPRCELVK…KDLSSYVRGC (127 aa)) folds into the C-type lysozyme domain. 4 cysteine pairs are disulfide-bonded: Cys-6/Cys-127, Cys-30/Cys-115, Cys-64/Cys-80, and Cys-76/Cys-94. Residues Glu-35 and Asp-52 contribute to the active site. Residues Lys-82, Asp-85, Asn-87, Asp-90, and Asp-91 each coordinate Ca(2+).

Belongs to the glycosyl hydrolase 22 family. As to quaternary structure, monomer. It depends on Ca(2+) as a cofactor.

The protein resides in the secreted. The enzyme catalyses Hydrolysis of (1-&gt;4)-beta-linkages between N-acetylmuramic acid and N-acetyl-D-glucosamine residues in a peptidoglycan and between N-acetyl-D-glucosamine residues in chitodextrins.. In terms of biological role, lysozymes have primarily a bacteriolytic function; those in tissues and body fluids are associated with the monocyte-macrophage system and enhance the activity of immunoagents. This Columba livia (Rock dove) protein is Lysozyme C (LYZ).